An 805-amino-acid chain; its full sequence is Phenylalanine--tRNA ligase beta subunit (805 aa).

Residues 39 to 148 (APPFTGVVVT…AALRPGTDIR (110 aa)) enclose the tRNA-binding domain. The B5 domain occupies 399–474 (PVREPVRMRL…RVYGFERIPD (76 aa)). Mg(2+) is bound by residues Asp452, Asp458, Glu461, and Glu462. An FDX-ACB domain is found at 703–804 (SRQPVVVRDL…LVAAHNARQR (102 aa)).

This sequence belongs to the phenylalanyl-tRNA synthetase beta subunit family. Type 1 subfamily. Tetramer of two alpha and two beta subunits. Requires Mg(2+) as cofactor.

Its subcellular location is the cytoplasm. It carries out the reaction tRNA(Phe) + L-phenylalanine + ATP = L-phenylalanyl-tRNA(Phe) + AMP + diphosphate + H(+). The chain is Phenylalanine--tRNA ligase beta subunit from Bordetella pertussis (strain Tohama I / ATCC BAA-589 / NCTC 13251).